The primary structure comprises 270 residues: uncharacterized protein (270 aa).

This sequence belongs to the GSP E family.

This is an uncharacterized protein from Methanocaldococcus jannaschii (strain ATCC 43067 / DSM 2661 / JAL-1 / JCM 10045 / NBRC 100440) (Methanococcus jannaschii).